The sequence spans 317 residues: D-alanine--D-alanine ligase (317 aa).

The region spanning 103-299 is the ATP-grasp domain; that stretch reads KHIFRSLNID…FNELVKIIIE (197 aa). 130–183 serves as a coordination point for ATP; it reads KIDYPYVLKPINEGSSIGVYIIFSHEDYLELKDNSSTIMEKMIVEEYIPGIELH. 3 residues coordinate Mg(2+): Asp251, Glu265, and Asn267.

This sequence belongs to the D-alanine--D-alanine ligase family. Requires Mg(2+) as cofactor. The cofactor is Mn(2+).

The protein localises to the cytoplasm. It catalyses the reaction 2 D-alanine + ATP = D-alanyl-D-alanine + ADP + phosphate + H(+). It participates in cell wall biogenesis; peptidoglycan biosynthesis. Its function is as follows. Cell wall formation. The sequence is that of D-alanine--D-alanine ligase from Wolbachia sp. subsp. Drosophila simulans (strain wRi).